The sequence spans 206 residues: Guanylate kinase (206 aa).

The region spanning 5-183 (GNLFVVAAPS…AVFDLKTIVH (179 aa)) is the Guanylate kinase-like domain. ATP is bound at residue 12 to 19 (APSGAGKS).

This sequence belongs to the guanylate kinase family.

The protein localises to the cytoplasm. The catalysed reaction is GMP + ATP = GDP + ADP. Essential for recycling GMP and indirectly, cGMP. The protein is Guanylate kinase of Polaromonas sp. (strain JS666 / ATCC BAA-500).